A 62-amino-acid polypeptide reads, in one-letter code: Large ribosomal subunit protein bL32 (62 aa).

The segment covering Met-1–Arg-16 has biased composition (basic residues). Positions Met-1–Glu-62 are disordered. The span at Val-53–Glu-62 shows a compositional bias: polar residues.

Belongs to the bacterial ribosomal protein bL32 family.

The protein is Large ribosomal subunit protein bL32 of Alcanivorax borkumensis (strain ATCC 700651 / DSM 11573 / NCIMB 13689 / SK2).